A 115-amino-acid chain; its full sequence is U3-lycotoxin-Ls1a (115 aa).

The first 20 residues, 1 to 20, serve as a signal peptide directing secretion; the sequence is MKFVLLFGVLLLTLFSYSSA. The propeptide occupies 21–44; sequence EMLDDFDQADEDELLSLIEKEEAR. Cystine bridges form between Cys48/Cys63, Cys55/Cys72, Cys62/Cys87, and Cys74/Cys85.

The protein belongs to the neurotoxin 19 (CSTX) family. 01 subfamily. Expressed by the venom gland.

Its subcellular location is the secreted. The chain is U3-lycotoxin-Ls1a from Lycosa singoriensis (Wolf spider).